A 159-amino-acid polypeptide reads, in one-letter code: Eukaryotic translation initiation factor 5A (159 aa).

Residue Lys51 is modified to Hypusine.

This sequence belongs to the eIF-5A family. Post-translationally, lys-51 undergoes hypusination, a unique post-translational modification that consists in the addition of a butylamino group from spermidine to lysine side chain, leading to the formation of the unusual amino acid hypusine. eIF-5As are the only known proteins to undergo this modification, which is essential for their function.

Its subcellular location is the cytoplasm. Its function is as follows. Translation factor that promotes translation elongation and termination, particularly upon ribosome stalling at specific amino acid sequence contexts. Binds between the exit (E) and peptidyl (P) site of the ribosome and promotes rescue of stalled ribosome: specifically required for efficient translation of polyproline-containing peptides as well as other motifs that stall the ribosome. Acts as a ribosome quality control (RQC) cofactor by joining the RQC complex to facilitate peptidyl transfer during CAT tailing step. Functions as a regulator of autophagy. The sequence is that of Eukaryotic translation initiation factor 5A from Drosophila melanogaster (Fruit fly).